The primary structure comprises 218 residues: Protein N-lysine methyltransferase METTL21A (218 aa).

S-adenosyl-L-methionine is bound by residues tryptophan 47, 73–75, aspartate 94, tryptophan 125, and alanine 143; that span reads GAG.

Belongs to the methyltransferase superfamily. METTL21 family. As to quaternary structure, interacts with heat shock 70 family members; at least some of these proteins are methylation substrates.

The protein localises to the cytoplasm. The enzyme catalyses L-lysyl-[protein] + 3 S-adenosyl-L-methionine = N(6),N(6),N(6)-trimethyl-L-lysyl-[protein] + 3 S-adenosyl-L-homocysteine + 3 H(+). Its function is as follows. Protein-lysine methyltransferase that selectively trimethylates residues in heat shock protein 70 (HSP70) family members. Contributes to the in vivo trimethylation of Lys residues in HSPA1 and HSPA8. In vitro methylates 'Lys-561' in HSPA1, 'Lys-564' in HSPA2, 'Lys-585' in HSPA5, 'Lys-563' in HSPA6 and 'Lys-561' in HSPA8. This is Protein N-lysine methyltransferase METTL21A (Mettl21A) from Mus musculus (Mouse).